A 130-amino-acid chain; its full sequence is uncharacterized protein (130 aa).

2 stretches are compositionally biased toward polar residues: residues 1 to 27 (MEIL…QPSQ) and 36 to 46 (QAENQETAKNG). 2 disordered regions span residues 1–46 (MEIL…AKNG) and 103–130 (VSAQ…ELDL). Positions 27-51 (QDAHEKARQQAENQETAKNGMISQI) form a coiled coil.

Belongs to the PDCD5 family.

This is an uncharacterized protein from Caenorhabditis elegans.